Reading from the N-terminus, the 232-residue chain is Mitochondrial import inner membrane translocase subunit Tim21 (232 aa).

A mitochondrion-targeting transit peptide spans 1-31 (MLPRFLWRPVLCSYRALGSPSRSLTVSYRNL). Residues 96-116 (FTYFIVVLIGIGVTGGLFYVV) form a helical membrane-spanning segment.

This sequence belongs to the TIM21 family.

It localises to the mitochondrion membrane. Its function is as follows. May participate in the translocation of transit peptide-containing proteins across the mitochondrial inner membrane. This is Mitochondrial import inner membrane translocase subunit Tim21 (timm21) from Xenopus laevis (African clawed frog).